A 190-amino-acid chain; its full sequence is Superoxide dismutase [Fe] (190 aa).

Residues histidine 27, histidine 75, aspartate 156, and histidine 160 each coordinate Fe cation.

The protein belongs to the iron/manganese superoxide dismutase family. As to quaternary structure, homodimer. The cofactor is Fe cation.

The catalysed reaction is 2 superoxide + 2 H(+) = H2O2 + O2. In terms of biological role, destroys superoxide anion radicals which are normally produced within the cells and which are toxic to biological systems. This is Superoxide dismutase [Fe] (SODB) from Entamoeba histolytica (strain ATCC 30459 / HM-1:IMSS / ABRM).